The primary structure comprises 278 residues: MKFGVVARRDKLEALKLAYRVYDFLKVSGFDVVVDEDTYRYLGEFSEDDVLPLEEFDVDIIVVIGGDGTILRVEHKTKKEIPILGINMGTLGFLTEVEPHETFFALSRVIEGDYHIDERIKLRTFLDGENRVPDALNEVAVLTGIPGKIIHLKYYIDGGLADEVRADGLIISTPTGSTGYAMSAGGPFVDPRLDVVVIAPLAPIALSSRPMVVPSSSRIDVRNVAMTREVILSVDGQFYTYLSPETEITIVRSPRKTKFVRFNREIYPKYTMKIKSRF.

Aspartate 67 (proton acceptor) is an active-site residue. NAD(+) is bound by residues 67–68, arginine 72, 137–138, lysine 148, arginine 165, aspartate 167, 178–183, alanine 202, and glutamine 237; these read DG, NE, and TGYAMS.

Belongs to the NAD kinase family. A divalent metal cation is required as a cofactor.

It localises to the cytoplasm. It carries out the reaction NAD(+) + ATP = ADP + NADP(+) + H(+). Involved in the regulation of the intracellular balance of NAD and NADP, and is a key enzyme in the biosynthesis of NADP. Catalyzes specifically the phosphorylation on 2'-hydroxyl of the adenosine moiety of NAD to yield NADP. In Thermococcus kodakarensis (strain ATCC BAA-918 / JCM 12380 / KOD1) (Pyrococcus kodakaraensis (strain KOD1)), this protein is NAD kinase.